A 215-amino-acid polypeptide reads, in one-letter code: Na(+)-translocating NADH-quinone reductase subunit D (215 aa).

6 consecutive transmembrane segments (helical) span residues 14-34 (PFISNNPIMLQVLGICSALAV), 42-62 (FVMALAVTVVTGFSNLFISLI), 72-92 (IIVQMTIIASLVIVVDQLLKA), 103-123 (VFVGLIITNCIVMGRAEAYAM), 131-151 (FLDGIGNGLGYGFILLLVGTI), and 178-198 (NGMLLMPPSAFFLIGLFIWVL).

This sequence belongs to the NqrDE/RnfAE family. Composed of six subunits; NqrA, NqrB, NqrC, NqrD, NqrE and NqrF.

Its subcellular location is the cell inner membrane. It catalyses the reaction a ubiquinone + n Na(+)(in) + NADH + H(+) = a ubiquinol + n Na(+)(out) + NAD(+). Functionally, NQR complex catalyzes the reduction of ubiquinone-1 to ubiquinol by two successive reactions, coupled with the transport of Na(+) ions from the cytoplasm to the periplasm. NqrA to NqrE are probably involved in the second step, the conversion of ubisemiquinone to ubiquinol. The sequence is that of Na(+)-translocating NADH-quinone reductase subunit D from Tolumonas auensis (strain DSM 9187 / NBRC 110442 / TA 4).